Consider the following 165-residue polypeptide: Ribosome maturation factor RimM (165 aa).

The 72-residue stretch at 94–165 (EDEFYIADLT…YVILNYQREA (72 aa)) folds into the PRC barrel domain.

Belongs to the RimM family. Binds ribosomal protein uS19.

It is found in the cytoplasm. Its function is as follows. An accessory protein needed during the final step in the assembly of 30S ribosomal subunit, possibly for assembly of the head region. Essential for efficient processing of 16S rRNA. May be needed both before and after RbfA during the maturation of 16S rRNA. It has affinity for free ribosomal 30S subunits but not for 70S ribosomes. This Rickettsia rickettsii (strain Sheila Smith) protein is Ribosome maturation factor RimM.